We begin with the raw amino-acid sequence, 523 residues long: Maintenance of mitochondrial morphology protein 1 (523 aa).

Residues 1–43 lie on the Lumenal side of the membrane; sequence MAGSTSASLQTPYFPSSTQINPVRVDHTLPLPPAQPSLSFTQG. A helical transmembrane segment spans residues 44 to 64; sequence LLVGQLSVVLLIGAFIKFFIF. Topologically, residues 65 to 523 are cytoplasmic; it reads GEAPPPPSRG…GSMPDTVTET (459 aa). Disordered regions lie at residues 70–118, 295–349, 420–473, and 492–523; these read PPSR…SSST, TSDQ…SKHG, RTGL…IDRG, and GGHQ…VTET. 3 stretches are compositionally biased toward polar residues: residues 74–96, 105–118, and 295–312; these read GLSN…TDSS, STSN…SSST, and TSDQ…TTSE. Residues 151–412 form the SMP-LTD domain; it reads QPESLDWFNV…EPRVQVVGLP (262 aa). Positions 449 to 467 are enriched in gly residues; that stretch reads GVSGGGGSGGGSGGGGGSM.

Belongs to the MMM1 family. Homodimer. Component of the ER-mitochondria encounter structure (ERMES) or MDM complex, composed of MMM1, MDM10, MDM12 and MDM34. An MMM1 homodimer associates with one molecule of MDM12 on each side in a pairwise head-to-tail manner, and the SMP-LTD domains of MMM1 and MDM12 generate a continuous hydrophobic tunnel for phospholipid trafficking.

It localises to the endoplasmic reticulum membrane. Its function is as follows. Component of the ERMES/MDM complex, which serves as a molecular tether to connect the endoplasmic reticulum (ER) and mitochondria. Components of this complex are involved in the control of mitochondrial shape and protein biogenesis, and function in nonvesicular lipid trafficking between the ER and mitochondria. The MDM12-MMM1 subcomplex functions in the major beta-barrel assembly pathway that is responsible for biogenesis of all outer membrane beta-barrel proteins, and acts in a late step after the SAM complex. The MDM10-MDM12-MMM1 subcomplex further acts in the TOM40-specific pathway after the action of the MDM12-MMM1 complex. Essential for establishing and maintaining the structure of mitochondria and maintenance of mtDNA nucleoids. In Paracoccidioides brasiliensis (strain Pb03), this protein is Maintenance of mitochondrial morphology protein 1.